The following is a 218-amino-acid chain: UPF0502 protein CJA_1529 (218 aa).

The protein belongs to the UPF0502 family.

This is UPF0502 protein CJA_1529 from Cellvibrio japonicus (strain Ueda107) (Pseudomonas fluorescens subsp. cellulosa).